A 302-amino-acid chain; its full sequence is MSSAAELSPTPFGRLLTAMVTPFDADGCVDLALAGRLARYLVDEGSDGLVVCGTTGESPTLSWQEQHQLLGVVRQAVGPGVKVLAGTGSNSTAEAIEATTQAAAVGADGALVVVPYYNKPPQEGLEAHFRAIAQAAPELPLMLYNIPGRTGCSLAPATVARLMECPNVVSFKAASGTTDEVTQLRLQCGSKLAVYSGDDGLLLPMLSVGAVGVVSVASHLVGRRLKAMIEAYLNGQGALALSYHEQLQPLFKALFVTTNPIPVKAALELSGWPVGSPRLPLLPLDPVMRDALSNTLTALCQT.

T55 lines the pyruvate pocket. The active-site Proton donor/acceptor is the Y144. The active-site Schiff-base intermediate with substrate is the K172. V214 is a pyruvate binding site.

This sequence belongs to the DapA family. In terms of assembly, homotetramer; dimer of dimers.

The protein resides in the cytoplasm. It carries out the reaction L-aspartate 4-semialdehyde + pyruvate = (2S,4S)-4-hydroxy-2,3,4,5-tetrahydrodipicolinate + H2O + H(+). It participates in amino-acid biosynthesis; L-lysine biosynthesis via DAP pathway; (S)-tetrahydrodipicolinate from L-aspartate: step 3/4. Its function is as follows. Catalyzes the condensation of (S)-aspartate-beta-semialdehyde [(S)-ASA] and pyruvate to 4-hydroxy-tetrahydrodipicolinate (HTPA). This Prochlorococcus marinus (strain MIT 9313) protein is 4-hydroxy-tetrahydrodipicolinate synthase.